The sequence spans 233 residues: Snake venom serine protease ussurase (233 aa).

Positions 1 to 224 constitute a Peptidase S1 domain; it reads VIGGVECNIN…YTDWIQSIIS (224 aa). Disulfide bonds link Cys7–Cys138, Cys25–Cys41, Cys73–Cys231, Cys117–Cys185, Cys149–Cys164, and Cys175–Cys200. The Charge relay system role is filled by His40. Asn54 carries N-linked (GlcNAc...) asparagine glycosylation. The Charge relay system role is filled by Asp85. The active-site Charge relay system is Ser179.

This sequence belongs to the peptidase S1 family. Snake venom subfamily. In terms of assembly, monomer. In terms of tissue distribution, expressed by the venom gland.

It localises to the secreted. Functionally, snake venom serine protease that may act in the hemostasis system of the prey. This chain is Snake venom serine protease ussurase, found in Gloydius ussuriensis (Ussuri mamushi).